The following is a 431-amino-acid chain: uncharacterized protein (431 aa).

This is an uncharacterized protein from Acanthamoeba polyphaga mimivirus (APMV).